Here is a 343-residue protein sequence, read N- to C-terminus: 4-hydroxy-2-oxovalerate aldolase 1 (343 aa).

A Pyruvate carboxyltransferase domain is found at 8 to 260 (VTVHDMTLRD…ETGVDVAKIT (253 aa)). 16–17 (RD) lines the substrate pocket. Asp17 lines the Mn(2+) pocket. Residue His20 is the Proton acceptor of the active site. The substrate site is built by Ser170 and His199. Residues His199 and His201 each contribute to the Mn(2+) site. Tyr290 lines the substrate pocket.

The protein belongs to the 4-hydroxy-2-oxovalerate aldolase family.

It carries out the reaction (S)-4-hydroxy-2-oxopentanoate = acetaldehyde + pyruvate. This is 4-hydroxy-2-oxovalerate aldolase 1 from Dechloromonas aromatica (strain RCB).